Reading from the N-terminus, the 506-residue chain is Histidine--tRNA ligase, mitochondrial (506 aa).

The transit peptide at 1 to 33 (MHLLGLLPRRAWASLLSQLLRPPWASCTGAVRC) directs the protein to the mitochondrion. Position 67 is a phosphoserine (Ser67). Residues 131–133 (DLT), Arg158, Gln174, Asp178, Arg327, and 331–332 (YY) contribute to the L-histidine site. N6-acetyllysine is present on Lys444.

This sequence belongs to the class-II aminoacyl-tRNA synthetase family. Homodimer.

It is found in the mitochondrion. It catalyses the reaction tRNA(His) + L-histidine + ATP = L-histidyl-tRNA(His) + AMP + diphosphate + H(+). In terms of biological role, mitochondrial aminoacyl-tRNA synthetase that catalyzes the ATP-dependent ligation of histidine to the 3'-end of its cognate tRNA, via the formation of an aminoacyl-adenylate intermediate (His-AMP). This is Histidine--tRNA ligase, mitochondrial (HARS2) from Pongo abelii (Sumatran orangutan).